Consider the following 74-residue polypeptide: Arabinogalactan protein 20 (74 aa).

A signal peptide spans 1–26; the sequence is MASRNSVAVIALFAFVFAVISPFAGA. Residue Q27 is modified to Pyrrolidone carboxylic acid. A 4-hydroxyproline mark is found at P31, P33, and P35. P31, P33, and P35 each carry an O-linked (Ara...) hydroxyproline glycan. Residue S37 is the site of GPI-anchor amidated serine attachment. The propeptide at 38-74 is removed in mature form; sequence DGTSIDQGIAYLLMVVALVLTYLIHPLDASSSSYTFF.

The protein belongs to the AG-peptide AGP family. Post-translationally, contains 4-hydroxyproline; hydroxylated on Pro-31, Pro-33 and Pro-35. In terms of processing, O-glycosylated on hydroxyprolines; noncontiguous hydroxylproline residues are glycosylated with arabinogalactan.

It localises to the cell membrane. Its function is as follows. Proteoglycan that seems to be implicated in diverse developmental roles such as differentiation, cell-cell recognition, embryogenesis and programmed cell death. This Arabidopsis thaliana (Mouse-ear cress) protein is Arabinogalactan protein 20.